The sequence spans 107 residues: UPF0060 membrane protein glr4174 (107 aa).

4 helical membrane-spanning segments follow: residues 1–21 (MALL…FAFW), 26–46 (LGKN…FAWL), 58–78 (AYAA…WLVE), and 87–107 (LAGA…DRSP).

Belongs to the UPF0060 family.

The protein resides in the cell inner membrane. In Gloeobacter violaceus (strain ATCC 29082 / PCC 7421), this protein is UPF0060 membrane protein glr4174.